The sequence spans 437 residues: Probable E3 ubiquitin-protein ligase TRIML2 (437 aa).

The B box-type zinc-finger motif lies at threonine 14–isoleucine 55. Residues cysteine 19, histidine 22, cysteine 41, and histidine 47 each contribute to the Zn(2+) site. Residues isoleucine 55–glutamate 200 adopt a coiled-coil conformation. In terms of domain architecture, B30.2/SPRY spans aspartate 231 to proline 429.

It carries out the reaction S-ubiquitinyl-[E2 ubiquitin-conjugating enzyme]-L-cysteine + [acceptor protein]-L-lysine = [E2 ubiquitin-conjugating enzyme]-L-cysteine + N(6)-ubiquitinyl-[acceptor protein]-L-lysine.. It functions in the pathway protein modification; protein ubiquitination. In Homo sapiens (Human), this protein is Probable E3 ubiquitin-protein ligase TRIML2.